A 207-amino-acid polypeptide reads, in one-letter code: Probable GTP-binding protein EngB (207 aa).

Residues 24 to 199 enclose the EngB-type G domain; it reads GGYEVAFAGR…RGIVGGWLGL (176 aa). Residues 32-39, 59-63, 77-80, 144-147, and 178-180 each bind GTP; these read GRSNAGKS, GRTQQ, DLPG, TKAD, and YSG. Residues Ser-39 and Thr-61 each coordinate Mg(2+).

Belongs to the TRAFAC class TrmE-Era-EngA-EngB-Septin-like GTPase superfamily. EngB GTPase family. It depends on Mg(2+) as a cofactor.

Its function is as follows. Necessary for normal cell division and for the maintenance of normal septation. In Xanthomonas oryzae pv. oryzae (strain MAFF 311018), this protein is Probable GTP-binding protein EngB.